The chain runs to 126 residues: Topoisomerase I damage affected protein 2 (126 aa).

S2 is modified (N-acetylserine).

It belongs to the TDA2 family.

The protein localises to the cytoplasm. The protein resides in the cell projection. The chain is Topoisomerase I damage affected protein 2 (TDA2) from Saccharomyces cerevisiae (strain JAY291) (Baker's yeast).